We begin with the raw amino-acid sequence, 819 residues long: THO complex subunit 5B (819 aa).

The disordered stretch occupies residues 285–332 (ARQQSRKDSGMSSNTESSRLEDDGPDDDDDGQRRRKRPKKLTSKEGSD).

This sequence belongs to the THOC5 family. Component of the THO complex, which is composed of THO1, THO2, THO3, THO5, THO6 and THO7.

Its subcellular location is the nucleus. Acts as a component of the THO subcomplex of the TREX complex which is thought to couple mRNA transcription, processing and nuclear export. This chain is THO complex subunit 5B (THO5B), found in Arabidopsis thaliana (Mouse-ear cress).